A 547-amino-acid polypeptide reads, in one-letter code: CTP synthase (547 aa).

Residues 1-265 (MARYIFITGG…DQAVLDAFQI (265 aa)) are amidoligase domain. Residue S13 participates in CTP binding. S13 is a UTP binding site. Residues 14 to 19 (SLGKGL) and D71 contribute to the ATP site. Residues D71 and E139 each contribute to the Mg(2+) site. CTP contacts are provided by residues 146 to 148 (DIE), 186 to 191 (KTKPTQ), and K222. UTP contacts are provided by residues 186-191 (KTKPTQ) and K222. Positions 291–546 (RIAVVGKYTQ…IRAAMDNERL (256 aa)) constitute a Glutamine amidotransferase type-1 domain. Position 352 (G352) interacts with L-glutamine. The Nucleophile; for glutamine hydrolysis role is filled by C379. L-glutamine is bound by residues 380 to 383 (LGMQ), E403, and R474. Active-site residues include H519 and E521.

Belongs to the CTP synthase family. As to quaternary structure, homotetramer.

The enzyme catalyses UTP + L-glutamine + ATP + H2O = CTP + L-glutamate + ADP + phosphate + 2 H(+). It catalyses the reaction L-glutamine + H2O = L-glutamate + NH4(+). The catalysed reaction is UTP + NH4(+) + ATP = CTP + ADP + phosphate + 2 H(+). It functions in the pathway pyrimidine metabolism; CTP biosynthesis via de novo pathway; CTP from UDP: step 2/2. Allosterically activated by GTP, when glutamine is the substrate; GTP has no effect on the reaction when ammonia is the substrate. The allosteric effector GTP functions by stabilizing the protein conformation that binds the tetrahedral intermediate(s) formed during glutamine hydrolysis. Inhibited by the product CTP, via allosteric rather than competitive inhibition. Its function is as follows. Catalyzes the ATP-dependent amination of UTP to CTP with either L-glutamine or ammonia as the source of nitrogen. Regulates intracellular CTP levels through interactions with the four ribonucleotide triphosphates. The polypeptide is CTP synthase (Paracoccus denitrificans (strain Pd 1222)).